Reading from the N-terminus, the 662-residue chain is 72 kDa type IV collagenase (662 aa).

The first 29 residues, 1 to 29 (MEARVAWGALAGPLRVLCVLCCLLGRAIA), serve as a signal peptide directing secretion. Positions 30–109 (APSPIIKFPG…PRCGNPDVAN (80 aa)) are cleaved as a propeptide — activation peptide. Positions 100-107 (PRCGNPDV) match the Cysteine switch motif. Zn(2+) is bound at residue cysteine 102. The tract at residues 110–221 (YNFFPRKPKW…LWTLGEGQVV (112 aa)) is collagenase-like 1. The Ca(2+) site is built by aspartate 134 and aspartate 168. Zn(2+)-binding residues include histidine 178 and aspartate 180. Aspartate 185 and glycine 186 together coordinate Ca(2+). Histidine 193 serves as a coordination point for Zn(2+). Residues glycine 200, glycine 202, and aspartate 204 each contribute to the Ca(2+) site. Residue histidine 206 participates in Zn(2+) binding. Aspartate 208, aspartate 209, and glutamate 211 together coordinate Ca(2+). Positions 222–396 (RVKYGNADGE…WGFCPDQGYS (175 aa)) are collagen-binding. Fibronectin type-II domains are found at residues 228–276 (ADGE…FCPH), 286–334 (ADGQ…FCPE), and 344–392 (SEGA…FCPD). 6 cysteine pairs are disulfide-bonded: cysteine 233–cysteine 259, cysteine 247–cysteine 274, cysteine 291–cysteine 317, cysteine 305–cysteine 332, cysteine 349–cysteine 375, and cysteine 363–cysteine 390. Residues 397 to 467 (LFLVAAHEFG…GPTPTLGPVT (71 aa)) form a collagenase-like 2 region. Residue histidine 403 participates in Zn(2+) binding. Glutamate 404 is a catalytic residue. Zn(2+)-binding residues include histidine 407 and histidine 413. A required for inhibitor TIMP2 binding region spans residues 414-662 (SQDPGALMAP…GSIKSDWLGC (249 aa)). A disordered region spans residues 446-465 (GPSPDADTDTGTGPTPTLGP). A disulfide bond links cysteine 471 and cysteine 662. Hemopexin repeat units follow at residues 474–518 (DIVF…WPEL), 519–565 (PEKI…GLPP), 567–615 (VQQV…WNAI), and 616–662 (PDNL…WLGC). The Ca(2+) site is built by aspartate 478, aspartate 523, and aspartate 571. Asparagine 575 carries N-linked (GlcNAc...) asparagine glycosylation. Aspartate 620 contacts Ca(2+). Asparagine 644 is a glycosylation site (N-linked (GlcNAc...) asparagine).

The protein belongs to the peptidase M10A family. As to quaternary structure, interacts (via the C-terminal hemopexin-like domains-containing region) with the integrin alpha-V/beta-3; the interaction promotes vascular invasion in angiogenic vessels and melamoma cells. Interacts (via the C-terminal PEX domain) with TIMP2 (via the C-terminal); the interaction inhibits the degradation activity. Interacts with GSK3B. Requires Ca(2+) as cofactor. The cofactor is Zn(2+). Phosphorylation on multiple sites modulates enzymatic activity. Phosphorylated by PKC in vitro. Post-translationally, the propeptide is processed by MMP14 (MT-MMP1) and MMP16 (MT-MMP3). Autocatalytic cleavage in the C-terminal produces the anti-angiogenic peptide, PEX. This processing appears to be facilitated by binding integrinv/beta3.

It localises to the secreted. It is found in the extracellular space. The protein localises to the extracellular matrix. The protein resides in the membrane. Its subcellular location is the nucleus. It localises to the cytoplasm. It is found in the mitochondrion. The catalysed reaction is Cleavage of gelatin type I and collagen types IV, V, VII, X. Cleaves the collagen-like sequence Pro-Gln-Gly-|-Ile-Ala-Gly-Gln.. In terms of biological role, ubiquitinous metalloproteinase that is involved in diverse functions such as remodeling of the vasculature, angiogenesis, tissue repair, tumor invasion, inflammation, and atherosclerotic plaque rupture. As well as degrading extracellular matrix proteins, can also act on several nonmatrix proteins such as big endothelial 1 and beta-type CGRP promoting vasoconstriction. Also cleaves KISS at a Gly-|-Leu bond. Appears to have a role in myocardial cell death pathways. Contributes to myocardial oxidative stress by regulating the activity of GSK3beta. Cleaves GSK3beta in vitro. Involved in the formation of the fibrovascular tissues. Functionally, PEX, the C-terminal non-catalytic fragment of MMP2, possesses anti-angiogenic and anti-tumor properties and inhibits cell migration and cell adhesion to FGF2 and vitronectin. Ligand for integrin alpha-v/beta-3 on the surface of blood vessels. Mediates the proteolysis of CHUK/IKKA and initiates a primary innate immune response by inducing mitochondrial-nuclear stress signaling with activation of the pro-inflammatory NF-kappaB, NFAT and IRF transcriptional pathways. The chain is 72 kDa type IV collagenase (Mmp2) from Mus musculus (Mouse).